The sequence spans 455 residues: L-serine dehydratase (455 aa).

This sequence belongs to the iron-sulfur dependent L-serine dehydratase family. [4Fe-4S] cluster serves as cofactor.

It catalyses the reaction L-serine = pyruvate + NH4(+). Its pathway is carbohydrate biosynthesis; gluconeogenesis. This Helicobacter pylori (strain ATCC 700392 / 26695) (Campylobacter pylori) protein is L-serine dehydratase (sdaA).